The primary structure comprises 452 residues: Cysteine--tRNA ligase (452 aa).

Residue Cys-27 coordinates Zn(2+). The short motif at 29–39 (PTVQDHFHIGH) is the 'HIGH' region element. Asp-207, His-232, and Glu-236 together coordinate Zn(2+). A 'KMSKS' region motif is present at residues 265–269 (KMSKS). Lys-268 lines the ATP pocket.

This sequence belongs to the class-I aminoacyl-tRNA synthetase family. The cofactor is Zn(2+).

The protein localises to the cytoplasm. The catalysed reaction is tRNA(Cys) + L-cysteine + ATP = L-cysteinyl-tRNA(Cys) + AMP + diphosphate. The chain is Cysteine--tRNA ligase from Thermoplasma acidophilum (strain ATCC 25905 / DSM 1728 / JCM 9062 / NBRC 15155 / AMRC-C165).